Here is a 268-residue protein sequence, read N- to C-terminus: Tryptophan synthase alpha chain (268 aa).

Active-site proton acceptor residues include E49 and D60.

It belongs to the TrpA family. As to quaternary structure, tetramer of two alpha and two beta chains.

It catalyses the reaction (1S,2R)-1-C-(indol-3-yl)glycerol 3-phosphate + L-serine = D-glyceraldehyde 3-phosphate + L-tryptophan + H2O. It participates in amino-acid biosynthesis; L-tryptophan biosynthesis; L-tryptophan from chorismate: step 5/5. The alpha subunit is responsible for the aldol cleavage of indoleglycerol phosphate to indole and glyceraldehyde 3-phosphate. This is Tryptophan synthase alpha chain from Serratia proteamaculans (strain 568).